The following is a 437-amino-acid chain: Amino-acid acetyltransferase (437 aa).

The N-acetyltransferase domain maps to 289-429; that stretch reads ENIRLATSFD…EHYNYQRMSK (141 aa).

Belongs to the acetyltransferase family. ArgA subfamily.

The protein localises to the cytoplasm. The catalysed reaction is L-glutamate + acetyl-CoA = N-acetyl-L-glutamate + CoA + H(+). Its pathway is amino-acid biosynthesis; L-arginine biosynthesis; N(2)-acetyl-L-ornithine from L-glutamate: step 1/4. This is Amino-acid acetyltransferase from Actinobacillus pleuropneumoniae serotype 3 (strain JL03).